The chain runs to 299 residues: NAD(+) hydrolase PdTIR (299 aa).

The 134-residue stretch at 164–297 (PPHDIFISHA…EIVADLMAII (134 aa)) folds into the TIR domain. NAD(+)-binding positions include 173 to 174 (AW) and R203. The active site involves E239.

Homodimer. Interacts with host MYD88.

It catalyses the reaction NAD(+) + H2O = ADP-D-ribose + nicotinamide + H(+). NAD(+) hydrolase (NADase) that catalyzes cleavage of NAD(+) into ADP-D-ribose (ADPR) and nicotinamide. The polypeptide is NAD(+) hydrolase PdTIR (Paracoccus denitrificans (strain Pd 1222)).